The primary structure comprises 136 residues: Flagellar assembly factor FliW 2 (136 aa).

Belongs to the FliW family. Interacts with translational regulator CsrA and flagellin(s).

The protein resides in the cytoplasm. In terms of biological role, acts as an anti-CsrA protein, binds CsrA and prevents it from repressing translation of its target genes, one of which is flagellin. Binds to flagellin and participates in the assembly of the flagellum. This Wolinella succinogenes (strain ATCC 29543 / DSM 1740 / CCUG 13145 / JCM 31913 / LMG 7466 / NCTC 11488 / FDC 602W) (Vibrio succinogenes) protein is Flagellar assembly factor FliW 2.